A 191-amino-acid polypeptide reads, in one-letter code: RNA polymerase sigma factor CnrH (191 aa).

A Polymerase core binding motif is present at residues Asp-49–Leu-62. A DNA-binding region (H-T-H motif) is located at residues Gln-156–Gly-175.

It belongs to the sigma-70 factor family. ECF subfamily.

In terms of biological role, sigma factors are initiation factors that promote the attachment of RNA polymerase to specific initiation sites and are then released. This sigma factor regulates the genes for a membrane-located efflux system that confers resistance to nickel and cobalt. CnrH alone is able to activate CNR expression, while both CnrY and CrnX are needed for nickel induction of cnrH. Binds DNA in an RNA polymerase-dependent fashion. CnrH may be controlled by a CnrYX transmembrane anti-sigma factor complex which binds CnrH in the absence of Ni(2+). If Ni(2+) appears in the periplasm, it may be bound by CnrR (CnrX); the signal then would be transmitted by CnrY into the cytoplasm and CnrH would be released. This is RNA polymerase sigma factor CnrH (cnrH) from Cupriavidus metallidurans (strain ATCC 43123 / DSM 2839 / NBRC 102507 / CH34) (Ralstonia metallidurans).